We begin with the raw amino-acid sequence, 158 residues long: S-ribosylhomocysteine lyase (158 aa).

Fe cation is bound by residues histidine 57, histidine 61, and cysteine 125.

Belongs to the LuxS family. As to quaternary structure, homodimer. The cofactor is Fe cation.

It carries out the reaction S-(5-deoxy-D-ribos-5-yl)-L-homocysteine = (S)-4,5-dihydroxypentane-2,3-dione + L-homocysteine. Its function is as follows. Involved in the synthesis of autoinducer 2 (AI-2) which is secreted by bacteria and is used to communicate both the cell density and the metabolic potential of the environment. The regulation of gene expression in response to changes in cell density is called quorum sensing. Catalyzes the transformation of S-ribosylhomocysteine (RHC) to homocysteine (HC) and 4,5-dihydroxy-2,3-pentadione (DPD). The sequence is that of S-ribosylhomocysteine lyase from Deinococcus radiodurans (strain ATCC 13939 / DSM 20539 / JCM 16871 / CCUG 27074 / LMG 4051 / NBRC 15346 / NCIMB 9279 / VKM B-1422 / R1).